Consider the following 116-residue polypeptide: Methionine-R-sulfoxide reductase B1 (116 aa).

Positions 1–106 constitute a MsrB domain; it reads MSFCSFFGGE…FSSSLKFIPK (106 aa). Residues Cys23, Cys26, Cys71, and Cys74 each contribute to the Zn(2+) site. The active-site Nucleophile is Sec95. Position 95 (Sec95) is a non-standard amino acid, selenocysteine.

It belongs to the MsrB Met sulfoxide reductase family. Zn(2+) serves as cofactor. Truncated MSRB1/SEPX1 proteins produced by failed UGA/Sec decoding are ubiquitinated by the CRL2(FEM1C) E3 ubiquitin-protein ligase complex.

The protein resides in the cytoplasm. It localises to the nucleus. It is found in the cytoskeleton. The enzyme catalyses L-methionyl-[protein] + [thioredoxin]-disulfide + H2O = L-methionyl-(R)-S-oxide-[protein] + [thioredoxin]-dithiol. It carries out the reaction [thioredoxin]-disulfide + L-methionine + H2O = L-methionine (R)-S-oxide + [thioredoxin]-dithiol. In terms of biological role, methionine-sulfoxide reductase that specifically reduces methionine (R)-sulfoxide back to methionine. While in many cases, methionine oxidation is the result of random oxidation following oxidative stress, methionine oxidation is also a post-translational modification that takes place on specific residue. Acts as a regulator of actin assembly by reducing methionine (R)-sulfoxide mediated by MICALs (MICAL1, MICAL2 or MICAL3) on actin, thereby promoting filament repolymerization. Plays a role in innate immunity by reducing oxidized actin, leading to actin repolymerization in macrophages. This chain is Methionine-R-sulfoxide reductase B1 (MSRB1), found in Bos taurus (Bovine).